A 539-amino-acid polypeptide reads, in one-letter code: Alpha-aminoadipic semialdehyde dehydrogenase (539 aa).

The N-terminal 26 residues, 1 to 26 (MWRVPGLLCVRVARKSKFSGSWNRPA), are a transit peptide targeting the mitochondrion. Position 94 is an N6-acetyllysine; alternate (K94). K94 is modified (N6-succinyllysine; alternate). NAD(+) is bound by residues 192–194 (TAF), K218, 258–259 (GT), 274–275 (GS), 274–279 (GSTQVG), and 296–297 (EL). E296 serves as the catalytic Proton acceptor. The active-site Nucleophile is the C330. T331 is a binding site for (S)-2-amino-6-oxohexanoate. E427 contributes to the NAD(+) binding site. N6-acetyllysine is present on K462. Residues G489 and A490 each coordinate (S)-2-amino-6-oxohexanoate. N6-acetyllysine is present on K500. N6-succinyllysine is present on K537.

Belongs to the aldehyde dehydrogenase family. Homotetramer.

It localises to the cytoplasm. The protein localises to the cytosol. Its subcellular location is the nucleus. The protein resides in the mitochondrion. It catalyses the reaction nonanal + NAD(+) + H2O = nonanoate + NADH + 2 H(+). It carries out the reaction (S)-2-amino-6-oxohexanoate + NAD(+) + H2O = L-2-aminoadipate + NADH + 2 H(+). The catalysed reaction is betaine aldehyde + NAD(+) + H2O = glycine betaine + NADH + 2 H(+). The enzyme catalyses an aldehyde + NAD(+) + H2O = a carboxylate + NADH + 2 H(+). It catalyses the reaction hexanal + NAD(+) + H2O = hexanoate + NADH + 2 H(+). It carries out the reaction octanal + NAD(+) + H2O = octanoate + NADH + 2 H(+). The catalysed reaction is (E)-non-2-enal + NAD(+) + H2O = (E)-non-2-enoate + NADH + 2 H(+). The enzyme catalyses (E)-4-hydroxynon-2-enal + NAD(+) + H2O = (E)-4-hydroxynon-2-enoate + NADH + 2 H(+). It functions in the pathway amine and polyamine biosynthesis; betaine biosynthesis via choline pathway; betaine from betaine aldehyde: step 1/1. Multifunctional enzyme mediating important protective effects. Metabolizes betaine aldehyde to betaine, an important cellular osmolyte and methyl donor. Protects cells from oxidative stress by metabolizing a number of lipid peroxidation-derived aldehydes. Involved in lysine catabolism. This is Alpha-aminoadipic semialdehyde dehydrogenase (ALDH7A1) from Bos taurus (Bovine).